The following is a 688-amino-acid chain: Potassium-transporting ATPase ATP-binding subunit (688 aa).

Helical transmembrane passes span 37 to 57 (FLVY…LVGI), 65 to 85 (ILGI…AEAI), 219 to 239 (IALQ…TVSL), and 262 to 282 (VALL…SIGI). Asp313 acts as the 4-aspartylphosphate intermediate in catalysis. Residues Asp350, Glu354, 383–390 (FTAKTRMS), and Lys401 each bind ATP. Mg(2+) contacts are provided by Asp524 and Asp528. The next 3 membrane-spanning stretches (helical) occupy residues 594-614 (FAII…LNIM), 622-642 (AIFS…PLAL), and 668-688 (IIVP…IGIV).

This sequence belongs to the cation transport ATPase (P-type) (TC 3.A.3) family. Type IA subfamily. In terms of assembly, the system is composed of three essential subunits: KdpA, KdpB and KdpC.

The protein localises to the cell membrane. It catalyses the reaction K(+)(out) + ATP + H2O = K(+)(in) + ADP + phosphate + H(+). In terms of biological role, part of the high-affinity ATP-driven potassium transport (or Kdp) system, which catalyzes the hydrolysis of ATP coupled with the electrogenic transport of potassium into the cytoplasm. This subunit is responsible for energy coupling to the transport system and for the release of the potassium ions to the cytoplasm. The protein is Potassium-transporting ATPase ATP-binding subunit of Clostridium botulinum (strain Alaska E43 / Type E3).